Consider the following 92-residue polypeptide: MARSVWKGPFVDGYLLKKAEKVRESGRSEVIKMWTRRSTILPQFVGLTFGVYNGSKHIPVSVNEDMVGHKFGEFAPTRTYYGHGADKKAKRK.

Belongs to the universal ribosomal protein uS19 family.

Functionally, protein S19 forms a complex with S13 that binds strongly to the 16S ribosomal RNA. This chain is Small ribosomal subunit protein uS19, found in Allorhizobium ampelinum (strain ATCC BAA-846 / DSM 112012 / S4) (Agrobacterium vitis (strain S4)).